A 162-amino-acid polypeptide reads, in one-letter code: Nucleotide-binding protein Francci3_0558 (162 aa).

It belongs to the YajQ family.

Nucleotide-binding protein. In Frankia casuarinae (strain DSM 45818 / CECT 9043 / HFP020203 / CcI3), this protein is Nucleotide-binding protein Francci3_0558.